Consider the following 346-residue polypeptide: Selenoprotein V (346 aa).

Disordered regions lie at residues 1–40 (MNNQARTPAPSSARTSTSVRASTPTRTPTPLRTPTPVRTR) and 151–206 (LDPP…PGPT). A compositionally biased stretch (pro residues) spans 151 to 162 (LDPPPEPAPELP). Positions 270 to 273 (CGLU) form a cross-link, cysteinyl-selenocysteine (Cys-Sec); redox-active. Position 273 (selenocysteine 273) is a non-standard amino acid, selenocysteine.

Belongs to the SelWTH family. Post-translationally, truncated SELENOV proteins produced by failed UGA/Sec decoding are ubiquitinated by the CRL2(APPBP2) complex, which recognizes the glycine (Gly) at the C-terminus of truncated SELENOV proteins. As to expression, testis specific.

In terms of biological role, may be involved in a redox-related process. In Homo sapiens (Human), this protein is Selenoprotein V.